A 119-amino-acid polypeptide reads, in one-letter code: Ribonuclease P protein component (119 aa).

Belongs to the RnpA family. As to quaternary structure, consists of a catalytic RNA component (M1 or rnpB) and a protein subunit.

It catalyses the reaction Endonucleolytic cleavage of RNA, removing 5'-extranucleotides from tRNA precursor.. Functionally, RNaseP catalyzes the removal of the 5'-leader sequence from pre-tRNA to produce the mature 5'-terminus. It can also cleave other RNA substrates such as 4.5S RNA. The protein component plays an auxiliary but essential role in vivo by binding to the 5'-leader sequence and broadening the substrate specificity of the ribozyme. The chain is Ribonuclease P protein component from Yersinia pseudotuberculosis serotype O:1b (strain IP 31758).